The following is a 382-amino-acid chain: Tuliposide A-converting enzyme 2, chloroplastic (382 aa).

The transit peptide at 1–74 (MSVASFFSSL…PSPSLSPTPT (74 aa)) directs the protein to the chloroplast. The Acyl-ester intermediate role is filled by serine 232. Active-site charge relay system residues include aspartate 324 and histidine 356.

The protein belongs to the AB hydrolase superfamily. In terms of assembly, homodimer. As to expression, expressed in roots, stems, leaves, petals, stamens and pistils, but not in bulb scales.

It is found in the plastid. Its subcellular location is the chloroplast. It carries out the reaction 6-tuliposide A = tulipalin A + D-glucose. With respect to regulation, inhibited by NaF, AgNO(3), HgCl(2), CuSO(4) and phenylmethylsulfonyl fluoride (PMSF). Functionally, lactone-forming carboxylesterases, specifically catalyzing intramolecular transesterification, but not hydrolysis. Involved in the biosynthesis of tulipalins, defensive chemicals that show antimicrobial activities against a broad range of strains of bacteria and fungi. Substrates are 6-tuliposide A &gt; 6-tuliposide B. The polypeptide is Tuliposide A-converting enzyme 2, chloroplastic (TCEA2) (Tulipa gesneriana (Garden tulip)).